The primary structure comprises 248 residues: Pyridoxine 5'-phosphate synthase (248 aa).

A 3-amino-2-oxopropyl phosphate-binding site is contributed by N10. D12 to H13 contacts 1-deoxy-D-xylulose 5-phosphate. Residue R21 coordinates 3-amino-2-oxopropyl phosphate. H46 serves as the catalytic Proton acceptor. Positions 48 and 53 each coordinate 1-deoxy-D-xylulose 5-phosphate. The active-site Proton acceptor is E73. T103 contributes to the 1-deoxy-D-xylulose 5-phosphate binding site. Catalysis depends on H194, which acts as the Proton donor. 3-amino-2-oxopropyl phosphate is bound by residues G195 and G216 to H217.

It belongs to the PNP synthase family. Homooctamer; tetramer of dimers.

It localises to the cytoplasm. The enzyme catalyses 3-amino-2-oxopropyl phosphate + 1-deoxy-D-xylulose 5-phosphate = pyridoxine 5'-phosphate + phosphate + 2 H2O + H(+). It participates in cofactor biosynthesis; pyridoxine 5'-phosphate biosynthesis; pyridoxine 5'-phosphate from D-erythrose 4-phosphate: step 5/5. Functionally, catalyzes the complicated ring closure reaction between the two acyclic compounds 1-deoxy-D-xylulose-5-phosphate (DXP) and 3-amino-2-oxopropyl phosphate (1-amino-acetone-3-phosphate or AAP) to form pyridoxine 5'-phosphate (PNP) and inorganic phosphate. This is Pyridoxine 5'-phosphate synthase from Legionella pneumophila (strain Corby).